Consider the following 107-residue polypeptide: Transcriptional regulator Rv3488 (107 aa).

Cd(2+) is bound by residues His-16, Glu-30, His-34, and His-101.

In terms of assembly, homodimer.

May have transcription regulation and metal-detoxifying functions through which it may enhance intracellular survival of mycobacteria. Binds to its own promoter region and to the Rv1999c promoter region. It displays strong affinity for cadmium ions, but can also bind zinc, manganese and nickel. Expression increases the intracellular survival of recombinant M.smegmatis in murine macrophage cell line and increases its tolerance to cadmium ions. The protein is Transcriptional regulator Rv3488 of Mycobacterium tuberculosis (strain ATCC 25618 / H37Rv).